Consider the following 544-residue polypeptide: CTP synthase (544 aa).

The amidoligase domain stretch occupies residues Met1–Leu266. Ser13 is a binding site for CTP. UTP is bound at residue Ser13. Residues Ser14–Ile19 and Asp71 each bind ATP. Mg(2+) contacts are provided by Asp71 and Glu140. CTP is bound by residues Asp147–Glu149, Lys187–Gln192, and Lys223. Residues Lys187–Gln192 and Lys223 contribute to the UTP site. One can recognise a Glutamine amidotransferase type-1 domain in the interval Thr291 to Ala543. Gly354 provides a ligand contact to L-glutamine. The active-site Nucleophile; for glutamine hydrolysis is the Cys381. L-glutamine is bound by residues Leu382–Gln385, Glu404, and Arg471. Catalysis depends on residues His516 and Glu518.

The protein belongs to the CTP synthase family. As to quaternary structure, homotetramer.

It carries out the reaction UTP + L-glutamine + ATP + H2O = CTP + L-glutamate + ADP + phosphate + 2 H(+). It catalyses the reaction L-glutamine + H2O = L-glutamate + NH4(+). The enzyme catalyses UTP + NH4(+) + ATP = CTP + ADP + phosphate + 2 H(+). It participates in pyrimidine metabolism; CTP biosynthesis via de novo pathway; CTP from UDP: step 2/2. Allosterically activated by GTP, when glutamine is the substrate; GTP has no effect on the reaction when ammonia is the substrate. The allosteric effector GTP functions by stabilizing the protein conformation that binds the tetrahedral intermediate(s) formed during glutamine hydrolysis. Inhibited by the product CTP, via allosteric rather than competitive inhibition. Functionally, catalyzes the ATP-dependent amination of UTP to CTP with either L-glutamine or ammonia as the source of nitrogen. Regulates intracellular CTP levels through interactions with the four ribonucleotide triphosphates. In Psychrobacter arcticus (strain DSM 17307 / VKM B-2377 / 273-4), this protein is CTP synthase.